Reading from the N-terminus, the 288-residue chain is Syntaxin-1A (288 aa).

Over residues 1-13 the composition is skewed to basic and acidic residues; sequence MKDRTQELRTAKD. The disordered stretch occupies residues 1–20; it reads MKDRTQELRTAKDSDDDDDV. Residues 1-265 are Cytoplasmic-facing; it reads MKDRTQELRT…KYQSKARRKK (265 aa). Phosphoserine is present on residues serine 14, serine 64, and serine 95. Positions 68–109 form a coiled coil; sequence DEKTKEELEELMSDIKKTANKVRSKLKSIEQSIEQEEGLNRS. Serine 188 carries the phosphoserine; by DAPK1 modification. In terms of domain architecture, t-SNARE coiled-coil homology spans 192–254; that stretch reads LSEIETRHSE…ERAVSDTKKA (63 aa). Glycyl lysine isopeptide (Lys-Gly) (interchain with G-Cter in SUMO) cross-links involve residues lysine 252, lysine 253, and lysine 256. The chain crosses the membrane as a helical; Anchor for type IV membrane protein span at residues 266–288; sequence IMIIICCVILGIIIASTIGGIFG.

This sequence belongs to the syntaxin family. In terms of assembly, part of the SNARE core complex containing SNAP25, VAMP2 and STX1A; this complex constitutes the basic catalytic machinery of the complex neurotransmitter release apparatus. The SNARE complex interacts with CPLX1. Interacts with STXBP1. The interaction with STXBP1 promotes assembly of the SNARE complex. Interacts (via C-terminus) with KCNB1 (via C-terminus); the interaction increases in a calcium-dependent manner and induces a pore-independent enhancement of exocytosis in neuroendocrine cells, chromaffin cells, pancreatic beta cells and from the soma of dorsal root ganglia (DRG) neurons. Interacts with SYTL4. Interacts with STXBP6. Interacts with PLCL1 (via C2 domain). Interacts with OTOF. Interacts with LGI3. Interacts (via the H3 domain) with SLC6A4 (via the N-terminus); this interaction regulates SLC4A6 channel conductance in thalamocortical neurons. Interacts with SYT6 and SYT8; the interaction is Ca(2+)-dependent. Interacts with VAMP8. Interacts with SNAP23. Interacts with VAPA and SYBU. Interacts with PRRT2. Interacts with SEPT8. Interacts with STXBP5L. Interacts with synaptotagmin-1/SYT1. Interacts with SEPTIN5; in the cerebellar cortex. Interacts with SEPTIN4; in the striatum. Post-translationally, phosphorylated by CK2. Phosphorylation at Ser-188 by DAPK1 significantly decreases its interaction with STXBP1. In terms of processing, (Microbial infection) Targeted and hydrolyzed by C.botulinum neurotoxin type C (BoNT/C), which hydrolyzes the 253-Lys-|-Ala-254 bond. Cleavage inhibits neurotransmitter release. Phosphorylated by CK2. Phosphorylation at Ser-188 by DAPK1 significantly decreases its interaction with STXBP1. Post-translationally, sumoylated, sumoylation is required for regulation of synaptic vesicle endocytosis. Expressed predominantly in cerebral cortex, hippocampus, cerebellum, adrenal medulla and retina with weak expression detected in non-neuronal tissues.

Its subcellular location is the cytoplasmic vesicle. It localises to the secretory vesicle. The protein localises to the synaptic vesicle membrane. It is found in the cell membrane. The protein resides in the synapse. Its subcellular location is the synaptosome. Functionally, plays an essential role in hormone and neurotransmitter calcium-dependent exocytosis and endocytosis. Part of the SNARE (Soluble NSF Attachment Receptor) complex composed of SNAP25, STX1A and VAMP2 which mediates the fusion of synaptic vesicles with the presynaptic plasma membrane. STX1A and SNAP25 are localized on the plasma membrane while VAMP2 resides in synaptic vesicles. The pairing of the three SNAREs from the N-terminal SNARE motifs to the C-terminal anchors leads to the formation of the SNARE complex, which brings membranes into close proximity and results in final fusion. Participates in the calcium-dependent regulation of acrosomal exocytosis in sperm. Also plays an important role in the exocytosis of hormones such as insulin or glucagon-like peptide 1 (GLP-1). This is Syntaxin-1A (Stx1a) from Rattus norvegicus (Rat).